A 977-amino-acid chain; its full sequence is Serine/threonine-protein kinase/endoribonuclease IRE1 (977 aa).

Positions 1-20 are cleaved as a signal peptide; the sequence is MPARWLLLLLALLLPPPGPG. Over 21–445 the chain is Lumenal; sequence SFGRTSTVTL…EAPVDSMLKD (425 aa). N-linked (GlcNAc...) asparagine glycosylation is present at asparagine 178. The helical transmembrane segment at 446–466 threads the bilayer; the sequence is MATIILSTFLLVGWVAFIITY. Over 467-977 the chain is Cytoplasmic; the sequence is PLSVHQQRQL…PQPPVIPYAL (511 aa). Positions 498-559 are disordered; the sequence is FHPHGDLTQD…PSLEQDDEDE (62 aa). The span at 513–551 shows a compositional bias: low complexity; sequence SSGPFSESSGTSSPSPSPRASNHSLHPSSSASRAGTSPS. The region spanning 571–832 is the Protein kinase domain; that stretch reads FCPKDVLGHG…AKHVLKHPFF (262 aa). Residues 577–585, lysine 599, and 643–645 contribute to the ATP site; these read LGHGAEGTI and ELC. Aspartate 688 acts as the Proton acceptor; for protein kinase activity in catalysis. ATP is bound by residues 690 to 693 and aspartate 711; that span reads KPHN. A phosphoserine mark is found at serine 724 and serine 729. Residues 835-963 form the KEN domain; sequence LEKQLQFFQD…ERLFQTYYWH (129 aa). Positions 906–907 are interacts with hydroxy-aryl-aldehyde inhibitors; sequence NK.

It belongs to the protein kinase superfamily. Ser/Thr protein kinase family. Monomer. Homodimer; disulfide-linked; homodimerization takes place in response to endoplasmic reticulum stress and promotes activation of the kinase and endoribonuclease activities. Dimer formation is driven by hydrophobic interactions within the N-terminal luminal domains and stabilized by disulfide bridges. Interacts (via the luminal region) with DNAJB9/ERdj4; interaction takes place in unstressed cells and promotes recruitment of HSPA5/BiP. Interacts (via the luminal region) with HSPA5/BiP; HSPA5/BiP is a negative regulator of the unfolded protein response (UPR) that prevents homodimerization of ERN1/IRE1 and subsequent activation of the protein. Interaction with HSPA5 also competitively inhibits ERN1 interaction with MANF. Interacts with PDIA6, a negative regulator of the UPR; the interaction is direct and disrupts homodimerization. Interacts with DAB2IP (via PH domain); the interaction occurs in a endoplasmic reticulum stress-induced dependent manner and is required for subsequent recruitment of TRAF2 to ERN1/IRE1. Interacts with TAOK3 and TRAF2. Interacts with RNF13. Interacts with LACC1. Interacts (when unphosphorylated) with DDRGK1; interaction is dependent on UFM1 and takes place in response to endoplasmic reticulum stress, regulating ERN1/IRE1-alpha stability. Interacts (via N-terminus) with P4HB/PDIA1; the interaction is enhanced by phosphorylation of P4HB by FAM20C in response to endoplasmic reticulum stress and results in attenuation of ERN1 activity. Interacts with TMBIM6; this interaction inhibits ERN1 activity. Interacts (via luminal domain) with MANF (via C-terminus); the interaction is decreased in the presence of increasing concentrations of Ca(2+). The cofactor is Mg(2+). Autophosphorylated following homodimerization. Autophosphorylation promotes activation of the endoribonuclease domain. In response to ER stress, phosphorylated at Ser-724, Ser-729 and possibly Ser-726; phosphorylation promotes oligomerization and endoribonuclease activity. Dephosphorylated at Ser-724, Ser-729 and possibly Ser-726 by RPAP2 to abort failed ER-stress adaptation and trigger apoptosis. Phosphorylated at Ser-724; in response to the ER stressor tunicamycin. Post-translationally, ADP-ribosylated by PARP16 upon ER stress, which increases both kinase and endonuclease activities. As to expression, expressed in liver (at protein level). Ubiquitously expressed. High levels in thymus, liver and lung. In the brain, preferentially expressed in cortical, hippocampal and olfactory neurons.

The protein resides in the endoplasmic reticulum membrane. The enzyme catalyses L-seryl-[protein] + ATP = O-phospho-L-seryl-[protein] + ADP + H(+). It carries out the reaction L-threonyl-[protein] + ATP = O-phospho-L-threonyl-[protein] + ADP + H(+). With respect to regulation, the kinase domain is activated by trans-autophosphorylation following homodimerization. Kinase activity is required for activation of the endoribonuclease domain. Endoribonuclease activity is specifically inhibited by hydroxy-aryl-aldehydes (HAA) MKC9989, OICR464 and OICR573. Serine/threonine-protein kinase and endoribonuclease that acts as a key sensor for the endoplasmic reticulum unfolded protein response (UPR). In unstressed cells, the endoplasmic reticulum luminal domain is maintained in its inactive monomeric state by binding to the endoplasmic reticulum chaperone HSPA5/BiP. Accumulation of misfolded protein in the endoplasmic reticulum causes release of HSPA5/BiP, allowing the luminal domain to homodimerize, promoting autophosphorylation of the kinase domain and subsequent activation of the endoribonuclease activity. The endoribonuclease activity is specific for XBP1 mRNA and excises 26 nucleotides from XBP1 mRNA. The resulting spliced transcript of XBP1 encodes a transcriptional activator protein that up-regulates expression of UPR target genes. Acts as an upstream signal for ER stress-induced GORASP2-mediated unconventional (ER/Golgi-independent) trafficking of CFTR to cell membrane by modulating the expression and localization of SEC16A. The chain is Serine/threonine-protein kinase/endoribonuclease IRE1 from Mus musculus (Mouse).